We begin with the raw amino-acid sequence, 263 residues long: Izumo sperm-egg fusion protein 3 (263 aa).

Residues 1–22 (MGDLWVLLFSSLSLAAFHGVRG) form the signal peptide. Over 23 to 176 (CLECDPKFTE…EDPKTAENRE (154 aa)) the chain is Extracellular. N-linked (GlcNAc...) asparagine glycosylation is found at Asn98 and Asn128. Residues 177-197 (ISLYLIFIAEAVILASAVLLF) traverse the membrane as a helical segment. The Cytoplasmic segment spans residues 198-263 (HVCISHRRKM…CAESEMQTGT (66 aa)). A disordered region spans residues 241–263 (GRSNSNSLTGEPTCAESEMQTGT).

Belongs to the Izumo family. In terms of assembly, monomer and homodimer. As to expression, sperm-specific (at protein level).

The protein localises to the cell membrane. The protein resides in the cytoplasmic vesicle. Its subcellular location is the secretory vesicle. It localises to the acrosome inner membrane. Functionally, plays an important role in the biogenesis of the acrosome during sperm development. The chain is Izumo sperm-egg fusion protein 3 (Izumo3) from Mus musculus (Mouse).